The following is a 247-amino-acid chain: Small ribosomal subunit protein uS2 (247 aa).

It belongs to the universal ribosomal protein uS2 family.

The sequence is that of Small ribosomal subunit protein uS2 from Cupriavidus pinatubonensis (strain JMP 134 / LMG 1197) (Cupriavidus necator (strain JMP 134)).